We begin with the raw amino-acid sequence, 141 residues long: Hemoglobin subunit alpha (141 aa).

Positions 1 to 141 (VLSSDDKCNV…VSSVLTSKYR (141 aa)) constitute a Globin domain. His-58 lines the O2 pocket. A heme b-binding site is contributed by His-87.

The protein belongs to the globin family. As to quaternary structure, heterotetramer of two alpha chains and two beta chains. As to expression, red blood cells.

Its function is as follows. Involved in oxygen transport from the lung to the various peripheral tissues. Has antimicrobial activity against B.subtilis ATCC 6633. Has antioxidant activity. This chain is Hemoglobin subunit alpha, found in Crocodylus siamensis (Siamese crocodile).